Here is a 115-residue protein sequence, read N- to C-terminus: Probable K(+)/H(+) antiporter subunit C (115 aa).

The next 3 membrane-spanning stretches (helical) occupy residues 4 to 21 (ILSAGIGTLTASGVYLLL), 28 to 47 (VIIGLSLLSFAVNLFIFGMG), and 75 to 97 (ALVLTAIVIGFAMTALFLVVLLA).

This sequence belongs to the CPA3 antiporters (TC 2.A.63) subunit C family. May form a hetero-oligomeric complex that consists of six subunits: PhaAB, PhaC, PhaD, PhaE, PhaF and PhaG.

The protein localises to the cell membrane. In terms of biological role, part of a K(+) efflux system which is required for the adaptation of R.meliloti to alkaline pH as well as for the infection process during symbiotic nodule development. In Rhizobium meliloti (strain 1021) (Ensifer meliloti), this protein is Probable K(+)/H(+) antiporter subunit C (phaC).